Reading from the N-terminus, the 198-residue chain is Nucleoid occlusion factor SlmA (198 aa).

The region spanning 9 to 70 (RNRREEILQS…SLIEFIEDSL (62 aa)) is the HTH tetR-type domain. The H-T-H motif DNA-binding region spans 33-52 (TTAKLAASVGVSEAALYRHF). Residues 117 to 145 (EQDRLQGRINQLFERIEAQLRQVLREKKM) adopt a coiled-coil conformation.

This sequence belongs to the nucleoid occlusion factor SlmA family. Homodimer. Interacts with FtsZ.

It is found in the cytoplasm. It localises to the nucleoid. Functionally, required for nucleoid occlusion (NO) phenomenon, which prevents Z-ring formation and cell division over the nucleoid. Acts as a DNA-associated cell division inhibitor that binds simultaneously chromosomal DNA and FtsZ, and disrupts the assembly of FtsZ polymers. SlmA-DNA-binding sequences (SBS) are dispersed on non-Ter regions of the chromosome, preventing FtsZ polymerization at these regions. The sequence is that of Nucleoid occlusion factor SlmA from Cronobacter sakazakii (strain ATCC BAA-894) (Enterobacter sakazakii).